Here is a 33-residue protein sequence, read N- to C-terminus: Cytochrome c oxidase subunit 5B liver, mitochondrial (33 aa).

This sequence belongs to the cytochrome c oxidase subunit 5B family. In terms of assembly, component of the cytochrome c oxidase (complex IV, CIV), a multisubunit enzyme composed of 14 subunits. The complex is composed of a catalytic core of 3 subunits MT-CO1, MT-CO2 and MT-CO3, encoded in the mitochondrial DNA, and 11 supernumerary subunits COX4I, COX5A, COX5B, COX6A, COX6B, COX6C, COX7A, COX7B, COX7C, COX8 and NDUFA4, which are encoded in the nuclear genome. The complex exists as a monomer or a dimer and forms supercomplexes (SCs) in the inner mitochondrial membrane with NADH-ubiquinone oxidoreductase (complex I, CI) and ubiquinol-cytochrome c oxidoreductase (cytochrome b-c1 complex, complex III, CIII), resulting in different assemblies (supercomplex SCI(1)III(2)IV(1) and megacomplex MCI(2)III(2)IV(2)).

The protein localises to the mitochondrion inner membrane. It functions in the pathway energy metabolism; oxidative phosphorylation. Its function is as follows. Component of the cytochrome c oxidase, the last enzyme in the mitochondrial electron transport chain which drives oxidative phosphorylation. The respiratory chain contains 3 multisubunit complexes succinate dehydrogenase (complex II, CII), ubiquinol-cytochrome c oxidoreductase (cytochrome b-c1 complex, complex III, CIII) and cytochrome c oxidase (complex IV, CIV), that cooperate to transfer electrons derived from NADH and succinate to molecular oxygen, creating an electrochemical gradient over the inner membrane that drives transmembrane transport and the ATP synthase. Cytochrome c oxidase is the component of the respiratory chain that catalyzes the reduction of oxygen to water. Electrons originating from reduced cytochrome c in the intermembrane space (IMS) are transferred via the dinuclear copper A center (CU(A)) of subunit 2 and heme A of subunit 1 to the active site in subunit 1, a binuclear center (BNC) formed by heme A3 and copper B (CU(B)). The BNC reduces molecular oxygen to 2 water molecules using 4 electrons from cytochrome c in the IMS and 4 protons from the mitochondrial matrix. The chain is Cytochrome c oxidase subunit 5B liver, mitochondrial from Oncorhynchus mykiss (Rainbow trout).